A 391-amino-acid chain; its full sequence is Glycerol-3-phosphate dehydrogenase [NAD(+)] (391 aa).

NAD(+) is bound by residues 46–51, F78, and F134; that span reads GSGNWG. K157 provides a ligand contact to substrate. An NAD(+)-binding site is contributed by A190. K250 serves as the catalytic Proton acceptor. Residues R315 and Q344 each coordinate NAD(+). 315–316 contributes to the substrate binding site; the sequence is RN.

Belongs to the NAD-dependent glycerol-3-phosphate dehydrogenase family.

It carries out the reaction sn-glycerol 3-phosphate + NAD(+) = dihydroxyacetone phosphate + NADH + H(+). The chain is Glycerol-3-phosphate dehydrogenase [NAD(+)] (GPD) from Candida tropicalis (Yeast).